Reading from the N-terminus, the 421-residue chain is Hydrolyase poxO (421 aa).

The active-site Nucleophile is serine 239.

The protein belongs to the AB hydrolase superfamily. FUS2 hydrolase family. As to quaternary structure, homodimer.

It participates in secondary metabolite biosynthesis. Hydrolyase; part of the gene cluster that mediates the biosynthesis of oxaleimides, cytotoxic compounds containing an unusual disubstituted succinimide moiety. The first step of the pathway is provided by the HR-PKS poxF that serves in a new mode of collaborative biosynthesis with the PKS-NRPS poxE, by providing the olefin containing amino acid substrate via the synthesis of an ACP-bound dec-4-enoate. The cytochrome P450 monooxygenase poxM-catalyzed oxidation at the alpha-position creates the enzyme-bound 2-hydroxydec-4-enoyl-ACP thioester, which may be prone to spontaneous hydrolysis to yield 2-hydroxydec-4-enoic acid due to increased electrophilicity of the carbonyl. 2-hydroxydec-4-enoic acid can then be further oxidized by poxM to yield the alpha-ketoacid 2-oxodec-4-enoicacid, which is reductively aminated by the aminotransferase poxL to yield (S,E)-2-aminodec-4-enoic acid. The Hybrid PKS-NRPS synthetase poxE then performs condensation between the octaketide product of its PKS modules and the amino group of (S,E)-2-aminodec-4-enoic acid which is activated and incorporated by the adenylation domain. The resulting aminoacyl product can be cyclized by the Diels-Alderase PoxQ and reductively released by the reductive (R) domain of poxE to yield an aldehyde intermediate. The released aldehyde is then substrate for a Knoevenagel condensation by the hydrolyase poxO followed by an oxidation at the 5-position of the pyrrolidone ring. The presence of the olefin from the amino acid building block allows for migration of the substituted allyl group to occur. This allylic transposition reaction takes place in a conjugate addition, semipinacol-like fashion to yield a succinimide intermediate. Iterative two-electron oxidations of the C7 methyl of the succinimide intermediate to the carboxylic acid can be catalyzed by one of two remaining cytochrome P450 monooxygenasess poxC or poxD to yield oxaleimide A. Subsequent oxidation yields the maleimide scaffold oxaleimide I. Both oxaleimide A and oxaleimide I can undergo oxidative modifications in the decalin ring to yield the series of products oxaleimides B to H. In Penicillium oxalicum (strain 114-2 / CGMCC 5302) (Penicillium decumbens), this protein is Hydrolyase poxO.